A 150-amino-acid polypeptide reads, in one-letter code: Transcriptional repressor NrdR (150 aa).

The segment at 3-34 (CPFCGYEETKVLDSRPVSNGTSIRRRRECLQC) is a zinc-finger region. Residues 49–139 (IRIIKKDGRR…VYKEFRDLDS (91 aa)) form the ATP-cone domain.

The protein belongs to the NrdR family. It depends on Zn(2+) as a cofactor.

Negatively regulates transcription of bacterial ribonucleotide reductase nrd genes and operons by binding to NrdR-boxes. This chain is Transcriptional repressor NrdR, found in Petrotoga mobilis (strain DSM 10674 / SJ95).